We begin with the raw amino-acid sequence, 258 residues long: uncharacterized protein (258 aa).

Solcar repeat units follow at residues 9 to 78, 81 to 160, and 165 to 246; these read KPIL…AKAR, PGVR…FKKK, and DHVF…VKSH. The next 6 helical transmembrane spans lie at 11-31, 53-73, 87-107, 139-159, 171-191, and 218-239; these read ILVG…LSTI, GLSS…FVYE, LVSA…AEVV, MCGR…QFKK, PKGA…LDVI, and FEKG…YLGT.

Belongs to the mitochondrial carrier (TC 2.A.29) family.

It localises to the mitochondrion inner membrane. This is an uncharacterized protein from Schizosaccharomyces pombe (strain 972 / ATCC 24843) (Fission yeast).